A 312-amino-acid polypeptide reads, in one-letter code: Ribonuclease Z (312 aa).

Positions 63, 65, 67, 68, 141, 212, and 270 each coordinate Zn(2+). Asp-67 acts as the Proton acceptor in catalysis.

It belongs to the RNase Z family. As to quaternary structure, homodimer. It depends on Zn(2+) as a cofactor.

The catalysed reaction is Endonucleolytic cleavage of RNA, removing extra 3' nucleotides from tRNA precursor, generating 3' termini of tRNAs. A 3'-hydroxy group is left at the tRNA terminus and a 5'-phosphoryl group is left at the trailer molecule.. Functionally, zinc phosphodiesterase, which displays some tRNA 3'-processing endonuclease activity. Probably involved in tRNA maturation, by removing a 3'-trailer from precursor tRNA. This is Ribonuclease Z from Lactobacillus acidophilus (strain ATCC 700396 / NCK56 / N2 / NCFM).